A 615-amino-acid polypeptide reads, in one-letter code: DNA mismatch repair protein MutL (615 aa).

Positions 362 to 397 (HFAEPAVREPVAPRYTPAPASGSRPAAPWPNAQPGY) are disordered. Low complexity predominate over residues 378–391 (PAPASGSRPAAPWP).

This sequence belongs to the DNA mismatch repair MutL/HexB family.

This protein is involved in the repair of mismatches in DNA. It is required for dam-dependent methyl-directed DNA mismatch repair. May act as a 'molecular matchmaker', a protein that promotes the formation of a stable complex between two or more DNA-binding proteins in an ATP-dependent manner without itself being part of a final effector complex. The protein is DNA mismatch repair protein MutL of Escherichia coli O17:K52:H18 (strain UMN026 / ExPEC).